The following is a 310-amino-acid chain: Pyrimidine-specific ribonucleoside hydrolase RihA (310 aa).

His240 is a catalytic residue.

This sequence belongs to the IUNH family. RihA subfamily.

Functionally, hydrolyzes cytidine or uridine to ribose and cytosine or uracil, respectively. This Photobacterium profundum (strain SS9) protein is Pyrimidine-specific ribonucleoside hydrolase RihA.